The chain runs to 309 residues: Formimidoylglutamase (309 aa).

The Mn(2+) site is built by His-128, Asp-153, His-155, Asp-157, Cys-240, and Asp-242.

This sequence belongs to the arginase family. Requires Mn(2+) as cofactor.

It catalyses the reaction N-formimidoyl-L-glutamate + H2O = formamide + L-glutamate. It functions in the pathway amino-acid degradation; L-histidine degradation into L-glutamate; L-glutamate from N-formimidoyl-L-glutamate (hydrolase route): step 1/1. Catalyzes the conversion of N-formimidoyl-L-glutamate to L-glutamate and formamide. The chain is Formimidoylglutamase from Staphylococcus carnosus (strain TM300).